The primary structure comprises 674 residues: DNA ligase (674 aa).

NAD(+)-binding positions include 36–40 (DSVYD), 85–86 (SL), and E116. K118 serves as the catalytic N6-AMP-lysine intermediate. NAD(+)-binding residues include R139, E176, K292, and K316. C410, C413, C428, and C433 together coordinate Zn(2+). The BRCT domain occupies 596–674 (PSSGNIAGKT…EADLLKFLTN (79 aa)).

The protein belongs to the NAD-dependent DNA ligase family. LigA subfamily. Mg(2+) is required as a cofactor. It depends on Mn(2+) as a cofactor.

It carries out the reaction NAD(+) + (deoxyribonucleotide)n-3'-hydroxyl + 5'-phospho-(deoxyribonucleotide)m = (deoxyribonucleotide)n+m + AMP + beta-nicotinamide D-nucleotide.. Its function is as follows. DNA ligase that catalyzes the formation of phosphodiester linkages between 5'-phosphoryl and 3'-hydroxyl groups in double-stranded DNA using NAD as a coenzyme and as the energy source for the reaction. It is essential for DNA replication and repair of damaged DNA. The protein is DNA ligase of Rippkaea orientalis (strain PCC 8801 / RF-1) (Cyanothece sp. (strain PCC 8801)).